The chain runs to 546 residues: Chaperonin GroEL 1 (546 aa).

Residues 30–33, K51, 87–91, G415, 479–481, and D495 contribute to the ATP site; these read TLGP, DGTTT, and NAA. The tract at residues 526-546 is disordered; it reads KEDAPMPGGMPGGMGGMGMDM. A compositionally biased stretch (gly residues) spans 534 to 546; the sequence is GMPGGMGGMGMDM.

The protein belongs to the chaperonin (HSP60) family. In terms of assembly, forms a cylinder of 14 subunits composed of two heptameric rings stacked back-to-back. Interacts with the co-chaperonin GroES.

It is found in the cytoplasm. The catalysed reaction is ATP + H2O + a folded polypeptide = ADP + phosphate + an unfolded polypeptide.. Together with its co-chaperonin GroES, plays an essential role in assisting protein folding. The GroEL-GroES system forms a nano-cage that allows encapsulation of the non-native substrate proteins and provides a physical environment optimized to promote and accelerate protein folding. In Burkholderia cenocepacia (strain HI2424), this protein is Chaperonin GroEL 1.